A 390-amino-acid chain; its full sequence is Lipid-A-disaccharide synthase (390 aa).

This sequence belongs to the LpxB family.

It carries out the reaction a lipid X + a UDP-2-N,3-O-bis[(3R)-3-hydroxyacyl]-alpha-D-glucosamine = a lipid A disaccharide + UDP + H(+). It functions in the pathway bacterial outer membrane biogenesis; LPS lipid A biosynthesis. Its function is as follows. Condensation of UDP-2,3-diacylglucosamine and 2,3-diacylglucosamine-1-phosphate to form lipid A disaccharide, a precursor of lipid A, a phosphorylated glycolipid that anchors the lipopolysaccharide to the outer membrane of the cell. The chain is Lipid-A-disaccharide synthase from Haemophilus influenzae (strain PittGG).